A 122-amino-acid chain; its full sequence is Alkaline proteinase inhibitor (122 aa).

The first 25 residues, methionine 1–alanine 25, serve as a signal peptide directing secretion. The segment at glutamine 101–asparagine 122 is disordered.

It belongs to the protease inhibitor I38 family.

Its subcellular location is the periplasm. Inhibitor of the alkaline protease. This Pseudomonas tolaasii protein is Alkaline proteinase inhibitor (inh).